The following is a 719-amino-acid chain: MPVEYDPKTGLINLHNDQISYVIQILAHRYPVHRYFGRYFSKQPYFEPMPSGSHAFANDPTERFPYSVTSLPLEYSTIGSGDYRQPAYVIKDANNQLLPILEYTGFSVNDQPINSRQLPPTVSKHTPVTTLVIHLTDAVTKLQMDLNYTIFENQPLILRSTTLRHHGTTNLQVTALSSAQLDLPTDQYTALTLSGTHAHEANPSFNRLHPGLQTVRSLRGTSGPQHQPFMALAEPNTTELAGTVIGCALAWSGNFDSTVEVDQYQHSRLTIGLEPDTFEWQLKPNSSFQTPEAVLTWTNTGFNGMSQVFHDFSYQLMPSQTNIPSVLNTWETLTFAVSESKVQHLIEHAHQLGLQMLVLDDGWFVNRNGENGQLGDWFVDPIKFPNGLNPLAQQAHHHRMKFGLWVEPEMITTNSQLYQQHPDWVLQYVDRTPITARHQLVLDLSQAAVRDHLITTLTNLVQNNQLDYLKWDMNRHLTQVGSTHLPAAQQGELYHRYVCGLYDILTRLKRACPKLIIENCSAGGGRFDFGMLPYTNQTWISDLTDPVDRATIENGFSYLFPPRIFSNHITASPNAQNGRITPFETRLQLACIGQLGLELNPKQLAPSEQQLLRGALIKYQQLKSTFIKAHFYRLPTTRHVVAWLIVTADKKQAICCYLNGLNSRVKTQHPLPLHYLDAELAYSDSSGNRYTGHQLNTMGIPLKPTNADFTSQLIYLCQN.

D472 (nucleophile) is an active-site residue. The active-site Proton donor is the D542.

It belongs to the glycosyl hydrolase 36 family.

The catalysed reaction is Hydrolysis of terminal, non-reducing alpha-D-galactose residues in alpha-D-galactosides, including galactose oligosaccharides, galactomannans and galactolipids.. Its function is as follows. Alpha-galactosidase associated with the sucrase operon. The sequence is that of Alpha-galactosidase 2 (agaS) from Pediococcus pentosaceus.